We begin with the raw amino-acid sequence, 227 residues long: Cytochrome c oxidase subunit 2 (227 aa).

Over 1–14 (MAYPFQLGLQDATS) the chain is Mitochondrial intermembrane. The chain crosses the membrane as a helical span at residues 15–45 (PIMEELMNFHDHTLMIVFLISSLVLYIISLM). The Mitochondrial matrix segment spans residues 46–59 (LTTKLTHTSTMDAQ). Residues 60-87 (EVETIWTILPAVILILIALPSLRILYMM) traverse the membrane as a helical segment. Residues 88 to 227 (DEINNPVLTV…NFENWSTSMI (140 aa)) are Mitochondrial intermembrane-facing. Cu cation is bound by residues histidine 161, cysteine 196, glutamate 198, cysteine 200, histidine 204, and methionine 207. Glutamate 198 lines the Mg(2+) pocket.

The protein belongs to the cytochrome c oxidase subunit 2 family. As to quaternary structure, component of the cytochrome c oxidase (complex IV, CIV), a multisubunit enzyme composed of 14 subunits. The complex is composed of a catalytic core of 3 subunits MT-CO1, MT-CO2 and MT-CO3, encoded in the mitochondrial DNA, and 11 supernumerary subunits COX4I, COX5A, COX5B, COX6A, COX6B, COX6C, COX7A, COX7B, COX7C, COX8 and NDUFA4, which are encoded in the nuclear genome. The complex exists as a monomer or a dimer and forms supercomplexes (SCs) in the inner mitochondrial membrane with NADH-ubiquinone oxidoreductase (complex I, CI) and ubiquinol-cytochrome c oxidoreductase (cytochrome b-c1 complex, complex III, CIII), resulting in different assemblies (supercomplex SCI(1)III(2)IV(1) and megacomplex MCI(2)III(2)IV(2)). Found in a complex with TMEM177, COA6, COX18, COX20, SCO1 and SCO2. Interacts with TMEM177 in a COX20-dependent manner. Interacts with COX20. Interacts with COX16. Cu cation serves as cofactor.

It localises to the mitochondrion inner membrane. The enzyme catalyses 4 Fe(II)-[cytochrome c] + O2 + 8 H(+)(in) = 4 Fe(III)-[cytochrome c] + 2 H2O + 4 H(+)(out). Its function is as follows. Component of the cytochrome c oxidase, the last enzyme in the mitochondrial electron transport chain which drives oxidative phosphorylation. The respiratory chain contains 3 multisubunit complexes succinate dehydrogenase (complex II, CII), ubiquinol-cytochrome c oxidoreductase (cytochrome b-c1 complex, complex III, CIII) and cytochrome c oxidase (complex IV, CIV), that cooperate to transfer electrons derived from NADH and succinate to molecular oxygen, creating an electrochemical gradient over the inner membrane that drives transmembrane transport and the ATP synthase. Cytochrome c oxidase is the component of the respiratory chain that catalyzes the reduction of oxygen to water. Electrons originating from reduced cytochrome c in the intermembrane space (IMS) are transferred via the dinuclear copper A center (CU(A)) of subunit 2 and heme A of subunit 1 to the active site in subunit 1, a binuclear center (BNC) formed by heme A3 and copper B (CU(B)). The BNC reduces molecular oxygen to 2 water molecules using 4 electrons from cytochrome c in the IMS and 4 protons from the mitochondrial matrix. This chain is Cytochrome c oxidase subunit 2 (MT-CO2), found in Apodemus mystacinus (Broad-toothed field mouse).